A 326-amino-acid polypeptide reads, in one-letter code: tRNA-modifying protein YgfZ (326 aa).

The folate site is built by Trp27 and Trp189.

This sequence belongs to the tRNA-modifying YgfZ family.

It localises to the cytoplasm. Folate-binding protein involved in regulating the level of ATP-DnaA and in the modification of some tRNAs. It is probably a key factor in regulatory networks that act via tRNA modification, such as initiation of chromosomal replication. In Escherichia coli O17:K52:H18 (strain UMN026 / ExPEC), this protein is tRNA-modifying protein YgfZ.